A 507-amino-acid chain; its full sequence is Maturase K (507 aa).

It belongs to the intron maturase 2 family. MatK subfamily.

The protein localises to the plastid. The protein resides in the chloroplast. Functionally, usually encoded in the trnK tRNA gene intron. Probably assists in splicing its own and other chloroplast group II introns. This chain is Maturase K, found in Lyonia ferruginea (Rusty staggerbush).